The sequence spans 300 residues: MTAFGVEPYGQPKYLEIAGKRMAYIDEGKGDAIVFQHGNPTSSYLWRNIMPHLEGLGRLVACDLIGMGASDKLSPSGPDRYSYGEQRDFLFALWDTLDLGDHVVLVLHDWGSALGFDWANQHRDRVQGIAFMEAIVTPMTWADWPPAVRGVFQGFRSPQGEPMALEHNIFVERVLPGAILRQLSDEEMNHYRRPFVNGGEDRRPTLSWPRNLPIDGEPAEVVALVNEYRSWLEETDMPKLFINAEPGAIITGRIRDYVRSWPNQTEITVPGVHFVQEDSPEEIGAAIAQFVRQLRSAAGV.

The AB hydrolase-1 domain maps to Ala32 to Phe155. Asp109 functions as the Nucleophile in the catalytic mechanism. The Proton donor role is filled by Glu133. The active-site Proton acceptor is the His273.

This sequence belongs to the haloalkane dehalogenase family. Type 2 subfamily. As to quaternary structure, monomer.

The catalysed reaction is 1-haloalkane + H2O = a halide anion + a primary alcohol + H(+). Its function is as follows. Catalyzes hydrolytic cleavage of carbon-halogen bonds in halogenated aliphatic compounds, leading to the formation of the corresponding primary alcohols, halide ions and protons. The protein is Haloalkane dehalogenase of Mycobacterium bovis (strain ATCC BAA-935 / AF2122/97).